The chain runs to 136 residues: Protein PsiE (136 aa).

A run of 4 helical transmembrane segments spans residues 15–35 (ILQN…VVFL), 55–75 (YELV…ALIV), 83–103 (HFPL…LIIV), and 108–128 (PMDV…LWLC).

Belongs to the PsiE family.

The protein localises to the cell inner membrane. The sequence is that of Protein PsiE from Salmonella agona (strain SL483).